We begin with the raw amino-acid sequence, 212 residues long: Deoxyribose-phosphate aldolase (212 aa).

Residue D90 is the Proton donor/acceptor of the active site. K151 functions as the Schiff-base intermediate with acetaldehyde in the catalytic mechanism. K176 serves as the catalytic Proton donor/acceptor.

The protein belongs to the DeoC/FbaB aldolase family. DeoC type 1 subfamily.

The protein localises to the cytoplasm. It carries out the reaction 2-deoxy-D-ribose 5-phosphate = D-glyceraldehyde 3-phosphate + acetaldehyde. It participates in carbohydrate degradation; 2-deoxy-D-ribose 1-phosphate degradation; D-glyceraldehyde 3-phosphate and acetaldehyde from 2-deoxy-alpha-D-ribose 1-phosphate: step 2/2. Catalyzes a reversible aldol reaction between acetaldehyde and D-glyceraldehyde 3-phosphate to generate 2-deoxy-D-ribose 5-phosphate. The protein is Deoxyribose-phosphate aldolase of Halobacterium salinarum (strain ATCC 29341 / DSM 671 / R1).